A 146-amino-acid polypeptide reads, in one-letter code: Hemoglobin subunit beta (146 aa).

At valine 1 the chain carries N-acetylvaline. The 145-residue stretch at 2–146 folds into the Globin domain; that stretch reads HLTAEEKSLV…VANALAHKYH (145 aa). Threonine 12 bears the Phosphothreonine mark. Serine 44 is modified (phosphoserine). Lysine 59 bears the N6-acetyllysine mark. Histidine 63 contributes to the heme b binding site. Lysine 82 carries the post-translational modification N6-acetyllysine. Histidine 92 lines the heme b pocket. Residue cysteine 93 is modified to S-nitrosocysteine. Lysine 144 carries the post-translational modification N6-acetyllysine.

The protein belongs to the globin family. Heterotetramer of two alpha chains and two beta chains. Red blood cells.

Involved in oxygen transport from the lung to the various peripheral tissues. The sequence is that of Hemoglobin subunit beta (HBB) from Vulpes vulpes (Red fox).